We begin with the raw amino-acid sequence, 360 residues long: Phospho-N-acetylmuramoyl-pentapeptide-transferase (360 aa).

Transmembrane regions (helical) follow at residues 24 to 44 (RAVM…PWTI), 69 to 89 (GTPT…TLLW), 92 to 112 (WANP…ALGF), 133 to 153 (MVWQ…LAAN), 158 to 178 (ILIV…GFLV), 199 to 219 (GLAA…AYVS), 239 to 259 (VAIF…FNAY), 263 to 283 (VFMG…VAVI), 288 to 308 (FVLV…MLQV), and 337 to 357 (QVVV…LSTL).

Belongs to the glycosyltransferase 4 family. MraY subfamily. Mg(2+) serves as cofactor.

The protein resides in the cell inner membrane. It catalyses the reaction UDP-N-acetyl-alpha-D-muramoyl-L-alanyl-gamma-D-glutamyl-meso-2,6-diaminopimeloyl-D-alanyl-D-alanine + di-trans,octa-cis-undecaprenyl phosphate = di-trans,octa-cis-undecaprenyl diphospho-N-acetyl-alpha-D-muramoyl-L-alanyl-D-glutamyl-meso-2,6-diaminopimeloyl-D-alanyl-D-alanine + UMP. It functions in the pathway cell wall biogenesis; peptidoglycan biosynthesis. In terms of biological role, catalyzes the initial step of the lipid cycle reactions in the biosynthesis of the cell wall peptidoglycan: transfers peptidoglycan precursor phospho-MurNAc-pentapeptide from UDP-MurNAc-pentapeptide onto the lipid carrier undecaprenyl phosphate, yielding undecaprenyl-pyrophosphoryl-MurNAc-pentapeptide, known as lipid I. This is Phospho-N-acetylmuramoyl-pentapeptide-transferase from Neisseria gonorrhoeae (strain ATCC 700825 / FA 1090).